Here is a 101-residue protein sequence, read N- to C-terminus: Small ribosomal subunit protein uS14 (101 aa).

This sequence belongs to the universal ribosomal protein uS14 family. Part of the 30S ribosomal subunit. Contacts proteins S3 and S10.

In terms of biological role, binds 16S rRNA, required for the assembly of 30S particles and may also be responsible for determining the conformation of the 16S rRNA at the A site. The protein is Small ribosomal subunit protein uS14 of Burkholderia mallei (strain NCTC 10247).